A 344-amino-acid polypeptide reads, in one-letter code: uncharacterized protein (344 aa).

A signal peptide spans Met-1–Ala-20.

The protein belongs to the fimbrial protein family.

Its function is as follows. Part of the yehABCD fimbrial operon. Could contribute to adhesion to various surfaces in specific environmental niches. This is an uncharacterized protein from Escherichia coli (strain K12).